A 462-amino-acid chain; its full sequence is UDP-N-acetylmuramate--L-alanine ligase (462 aa).

Position 117–123 (117–123 (GTHGKTT)) interacts with ATP.

The protein belongs to the MurCDEF family.

It localises to the cytoplasm. The catalysed reaction is UDP-N-acetyl-alpha-D-muramate + L-alanine + ATP = UDP-N-acetyl-alpha-D-muramoyl-L-alanine + ADP + phosphate + H(+). The protein operates within cell wall biogenesis; peptidoglycan biosynthesis. Its function is as follows. Cell wall formation. The sequence is that of UDP-N-acetylmuramate--L-alanine ligase from Streptomyces coelicolor (strain ATCC BAA-471 / A3(2) / M145).